The sequence spans 514 residues: ATP synthase subunit alpha (514 aa).

G170 to T177 lines the ATP pocket.

The protein belongs to the ATPase alpha/beta chains family. In terms of assembly, F-type ATPases have 2 components, CF(1) - the catalytic core - and CF(0) - the membrane proton channel. CF(1) has five subunits: alpha(3), beta(3), gamma(1), delta(1), epsilon(1). CF(0) has three main subunits: a(1), b(2) and c(9-12). The alpha and beta chains form an alternating ring which encloses part of the gamma chain. CF(1) is attached to CF(0) by a central stalk formed by the gamma and epsilon chains, while a peripheral stalk is formed by the delta and b chains.

It is found in the cell inner membrane. It carries out the reaction ATP + H2O + 4 H(+)(in) = ADP + phosphate + 5 H(+)(out). Its function is as follows. Produces ATP from ADP in the presence of a proton gradient across the membrane. The alpha chain is a regulatory subunit. The polypeptide is ATP synthase subunit alpha (Pseudomonas aeruginosa (strain LESB58)).